Reading from the N-terminus, the 150-residue chain is Dynein light chain Tctex-type protein 2B (150 aa).

It belongs to the dynein light chain Tctex-type family.

It localises to the dynein axonemal particle. Acts as one of several non-catalytic accessory components of the cytoplasmic dynein 2 complex (dynein-2 complex), a motor protein complex that drives the movement of cargos along microtubules within cilia and flagella in concert with the intraflagellar transport (IFT) system. Required for proper retrograde ciliary transport. This chain is Dynein light chain Tctex-type protein 2B (dynlt2b), found in Danio rerio (Zebrafish).